We begin with the raw amino-acid sequence, 894 residues long: Phosphoenolpyruvate carboxylase (894 aa).

Catalysis depends on residues His-143 and Lys-556.

This sequence belongs to the PEPCase type 1 family. Mg(2+) serves as cofactor.

The enzyme catalyses oxaloacetate + phosphate = phosphoenolpyruvate + hydrogencarbonate. Its function is as follows. Forms oxaloacetate, a four-carbon dicarboxylic acid source for the tricarboxylic acid cycle. The protein is Phosphoenolpyruvate carboxylase of Acinetobacter baumannii (strain ATCC 17978 / DSM 105126 / CIP 53.77 / LMG 1025 / NCDC KC755 / 5377).